We begin with the raw amino-acid sequence, 170 residues long: Ribosome maturation factor RimM (170 aa).

Positions 97–170 (NADEYYWVDL…LVVVDWDPEF (74 aa)) constitute a PRC barrel domain.

Belongs to the RimM family. In terms of assembly, binds ribosomal protein uS19.

Its subcellular location is the cytoplasm. An accessory protein needed during the final step in the assembly of 30S ribosomal subunit, possibly for assembly of the head region. Essential for efficient processing of 16S rRNA. May be needed both before and after RbfA during the maturation of 16S rRNA. It has affinity for free ribosomal 30S subunits but not for 70S ribosomes. This is Ribosome maturation factor RimM from Stenotrophomonas maltophilia (strain R551-3).